We begin with the raw amino-acid sequence, 391 residues long: DNA replication and repair protein RecF (391 aa).

Residue 30–37 (GSNGQGKT) participates in ATP binding.

The protein belongs to the RecF family.

It localises to the cytoplasm. Functionally, the RecF protein is involved in DNA metabolism; it is required for DNA replication and normal SOS inducibility. RecF binds preferentially to single-stranded, linear DNA. It also seems to bind ATP. The protein is DNA replication and repair protein RecF of Saccharopolyspora erythraea (strain ATCC 11635 / DSM 40517 / JCM 4748 / NBRC 13426 / NCIMB 8594 / NRRL 2338).